A 295-amino-acid chain; its full sequence is ATP synthase gamma chain (295 aa).

This sequence belongs to the ATPase gamma chain family. As to quaternary structure, F-type ATPases have 2 components, CF(1) - the catalytic core - and CF(0) - the membrane proton channel. CF(1) has five subunits: alpha(3), beta(3), gamma(1), delta(1), epsilon(1). CF(0) has three main subunits: a, b and c.

It localises to the cell inner membrane. Functionally, produces ATP from ADP in the presence of a proton gradient across the membrane. The gamma chain is believed to be important in regulating ATPase activity and the flow of protons through the CF(0) complex. The sequence is that of ATP synthase gamma chain from Paraburkholderia phymatum (strain DSM 17167 / CIP 108236 / LMG 21445 / STM815) (Burkholderia phymatum).